We begin with the raw amino-acid sequence, 606 residues long: Membrane protein insertase YidC (606 aa).

A helical membrane pass occupies residues 8–28 (LILATALSFIVILVWFVLFPP). Residues 33-59 (MPLTGETSTELTPDAATGSLPSVTSDT) form a disordered region. The next 6 membrane-spanning stretches (helical) occupy residues 116-136 (IVTMLSPVGSPGAYYALYGWA), 348-368 (FIDSIDWGWFFFLTKPIFFLL), 374-394 (FIGNMGWAIIGLTLIIKAILL), 448-468 (LPILLQIPIFFSLYKVIFVTI), 506-526 (SIMALIFIGILPLLLGISMWL), and 542-562 (IFAWMPWVFMFMLGGFASGLV).

This sequence belongs to the OXA1/ALB3/YidC family. Type 1 subfamily. As to quaternary structure, interacts with the Sec translocase complex via SecD. Specifically interacts with transmembrane segments of nascent integral membrane proteins during membrane integration.

The protein resides in the cell inner membrane. Functionally, required for the insertion and/or proper folding and/or complex formation of integral membrane proteins into the membrane. Involved in integration of membrane proteins that insert both dependently and independently of the Sec translocase complex, as well as at least some lipoproteins. Aids folding of multispanning membrane proteins. The chain is Membrane protein insertase YidC from Roseobacter denitrificans (strain ATCC 33942 / OCh 114) (Erythrobacter sp. (strain OCh 114)).